The chain runs to 156 residues: Bacterial ferritin (156 aa).

One can recognise a Ferritin-like diiron domain in the interval 1–146; sequence MKGKPAVLAQ…KQLGLIEKIG (146 aa). Fe cation is bound by residues glutamate 18, glutamate 51, histidine 54, glutamate 94, glutamate 128, and histidine 131.

Belongs to the bacterioferritin family. As to quaternary structure, the bacterioferritin (BFR) complex is formed of 24 subunits (BfrA and BfrB) of unknown stoichiometry. The BFR is arranged as 12 dimers that are packed together to form an approximately spherical molecule with a central cavity, in which large amounts of iron can be deposited.

Its subcellular location is the cytoplasm. The catalysed reaction is 4 Fe(2+) + O2 + 4 H(+) = 4 Fe(3+) + 2 H2O. It catalyses the reaction Fe(2+)(in) = Fe(2+)(out). Part of the iron-storage bacterioferritin (BFR) complex which stores about 50% of intracellular iron. Iron-storage protein, whose ferroxidase center binds Fe(2+), oxidizes it using dioxygen to Fe(3+), and participates in the subsequent Fe(3+) oxide mineral core formation within the central cavity of the BFR protein shell. BFR rapidly binds iron in labeling experiments in vivo during iron-limiting conditions. The chain is Bacterial ferritin from Synechocystis sp. (strain ATCC 27184 / PCC 6803 / Kazusa).